The primary structure comprises 164 residues: Biotin carboxyl carrier protein of acetyl-CoA carboxylase (164 aa).

The 77-residue stretch at 86 to 162 (GDFIVSPLVG…QFGSKLFRIV (77 aa)) folds into the Biotinyl-binding domain. Lys128 carries the N6-biotinyllysine modification.

As to quaternary structure, homodimer.

It functions in the pathway lipid metabolism; fatty acid biosynthesis. In terms of biological role, this protein is a component of the acetyl coenzyme A carboxylase complex; first, biotin carboxylase catalyzes the carboxylation of the carrier protein and then the transcarboxylase transfers the carboxyl group to form malonyl-CoA. In Chlamydia trachomatis serovar D (strain ATCC VR-885 / DSM 19411 / UW-3/Cx), this protein is Biotin carboxyl carrier protein of acetyl-CoA carboxylase (accB).